The chain runs to 254 residues: Membrane protein US20 (254 aa).

A run of 7 helical transmembrane segments spans residues 31–51 (AIFI…WLGF), 62–82 (YSFF…YTLG), 89–109 (ATVL…FQMC), 114–134 (VLVG…GLAF), 143–163 (WKCI…LALL), 178–198 (AFSI…VIFF), and 208–228 (AVCL…MLSG).

It is found in the host membrane. The polypeptide is Membrane protein US20 (US20) (Homo sapiens (Human)).